We begin with the raw amino-acid sequence, 328 residues long: Tetraacyldisaccharide 4'-kinase (328 aa).

ATP is bound at residue 55–62 (TAGGNGKT).

The protein belongs to the LpxK family.

The catalysed reaction is a lipid A disaccharide + ATP = a lipid IVA + ADP + H(+). The protein operates within glycolipid biosynthesis; lipid IV(A) biosynthesis; lipid IV(A) from (3R)-3-hydroxytetradecanoyl-[acyl-carrier-protein] and UDP-N-acetyl-alpha-D-glucosamine: step 6/6. In terms of biological role, transfers the gamma-phosphate of ATP to the 4'-position of a tetraacyldisaccharide 1-phosphate intermediate (termed DS-1-P) to form tetraacyldisaccharide 1,4'-bis-phosphate (lipid IVA). In Shigella boydii serotype 18 (strain CDC 3083-94 / BS512), this protein is Tetraacyldisaccharide 4'-kinase.